Here is a 432-residue protein sequence, read N- to C-terminus: Transcobalamin-2 (432 aa).

An N-terminal signal peptide occupies residues 1 to 18; sequence MGHLGALLFLLGGLGALA. 3 disulfide bridges follow: C21-C270, C116-C312, and C165-C208. N-linked (GlcNAc...) asparagine glycosylation is present at N94. Residues Q104, 152–156, H193, 193–197, N245, S248, Q294, and 400–402 each bind cob(II)alamin; these read TSYYQ, HVSVD, and WQV.

This sequence belongs to the eukaryotic cobalamin transport proteins family. In terms of assembly, interacts with CD320 (via LDL-receptor class A domains). Expressed in mammary gland, kidney, lymphatic nodes and liver.

The protein resides in the secreted. Functionally, primary vitamin B12-binding and transport protein. Delivers cobalamin to cells. This chain is Transcobalamin-2 (TCN2), found in Bos taurus (Bovine).